A 655-amino-acid polypeptide reads, in one-letter code: MGKVIGIDLGTTNSCVAVLEGGKPIIVTNREGDRTTPSIVAVGRKGDRIVGRMAKRQAVTNAENTVYSIKRFIGRRWEDTEAERSRVTYTCVPGKDDTVNVTIRDRVCTPQEISAMVLQKLRQDAETFLGEPVTQAVITVPAYFTDAQRQATKDAGAIAGLKVLRIVNEPTAAALSYGLDKLHENSRILVFDLGGGTLDVSILQLGDSVFEVKATAGNNHLGGDDFDAVIVDWLADNFLKAESIDLRQDKMAIQRLREASEQAKIDLSTLPTTTINLPFIATATVDGAPEPKHIEVELQREQFEVLASNLVQATIEPIQQALKDSNLTIDQIDRILLVGGSSRIPAIQQAVQKFFGGKTPDLTINPDEAIALGAAIQAGVLGGEVKDVLLLDVIPLSLGLETLGGVFTKIIERNTTIPTSRTQVFTTATDGQVMVEVHVLQGERALVKDNKSLGRFQLTGIPPAPRGVPQIELAFDIDADGILNVSARDRGTGRAQGIRITSTGGLTSDEIEAMRRDAELYQEADQINLQMIELRTQFENLRYSFESTLQNNRELLTAEQQEPLEASLNALASGLESVSNEAELNQLRQQLEALKQQLYAIGAAAYRQDGSVTTIPVQPTFADLIGDNDNGSNETVAIERNDDDATVTADYEAIE.

Residue threonine 197 is modified to Phosphothreonine; by autocatalysis.

Belongs to the heat shock protein 70 family.

Functionally, acts as a chaperone. This is Chaperone protein DnaK 3 from Synechococcus sp. (strain ATCC 27144 / PCC 6301 / SAUG 1402/1) (Anacystis nidulans).